The sequence spans 375 residues: Probable G-protein coupled receptor 27 (375 aa).

Topologically, residues 1–23 (MANASEPGGSGGGEAAALGLKLA) are extracellular. N-linked (GlcNAc...) asparagine glycosylation is present at Asn-3. The chain crosses the membrane as a helical span at residues 24–44 (TLSLLLCVSLAGNVLFALLIV). The Cytoplasmic portion of the chain corresponds to 45 to 55 (RERSLHRAPYY). The helical transmembrane segment at 56 to 76 (LLLDLCLADGLRALACLPAVM) threads the bilayer. Residues 77–97 (LAARRAAAAAGAPPGALGCKL) are Extracellular-facing. An intrachain disulfide couples Cys-95 to Cys-171. A helical membrane pass occupies residues 98–118 (LAFLAALFCFHAAFLLLGVGV). Residues 119–139 (TRYLAIAHHRFYAERLAGWPC) lie on the Cytoplasmic side of the membrane. Residues 140–160 (AAMLVCAAWALALAAAFPPVL) traverse the membrane as a helical segment. Residues 161–181 (DGGGDDEDAPCALEQRPDGAP) lie on the Extracellular side of the membrane. A helical transmembrane segment spans residues 182–202 (GALGFLLLLAVVVGATHLVYL). The Cytoplasmic segment spans residues 203 to 285 (RLLFFIHDRR…FKTEKRLCKM (83 aa)). The chain crosses the membrane as a helical span at residues 286–306 (FYAVTLLFLLLWGPYVVASYL). The Extracellular segment spans residues 307-320 (RVLVRPGAVPQAYL). The chain crosses the membrane as a helical span at residues 321-341 (TASVWLTFAQAGINPVVCFLF). Topologically, residues 342 to 375 (NRELRDCFRAQFPCCQSPRTTQATHPCDLKGIGL) are cytoplasmic.

The protein belongs to the G-protein coupled receptor 1 family. As to expression, highly expressed as a 3.0 kb transcript in brain, ovary, testis, heart, prostate and peripheral Leukocytes. Lower levels in pancreas and small intestine. A 2.3 kb transcript was also found in peripheral Leukocytes. In brain regions, detected as a 3.0 kb transcript in all regions tested. Highest levels in the caudate nucleus, putamen, hippocampus and subthalamic nucleus. Lowest level in the cerebellum.

It is found in the cell membrane. In terms of biological role, orphan receptor. Possible candidate for amine-like G-protein coupled receptor. In Homo sapiens (Human), this protein is Probable G-protein coupled receptor 27 (GPR27).